Consider the following 482-residue polypeptide: G2/mitotic-specific cyclin cdc13 (482 aa).

Polar residues-rich tracts occupy residues 35–55 (LHSS…STNV), 78–92 (SKNT…SVST), and 118–140 (SVFN…SVST). The segment at 35-140 (LHSSENSLVN…LSTKSHSVST (106 aa)) is disordered. A Cyclin N-terminal domain is found at 206–332 (DIFEYLNELE…ILRVLEFNLA (127 aa)).

It belongs to the cyclin family. Cyclin AB subfamily. In terms of assembly, interacts with cdc2. Interacts with rum1. Associates with microtubules. Also interacts with cdc11.

The protein resides in the nucleus. It localises to the cytoplasm. The protein localises to the cytoskeleton. Its subcellular location is the microtubule organizing center. It is found in the spindle pole body. Its function is as follows. Essential for the control of the cell cycle at the G2/M (mitosis) transition. Interacts with the cdc2 protein kinase to form MPF. G2/M cyclins accumulate steadily during G2 and are abruptly destroyed at mitosis. Involved in the reorganization of the cytoskeleton on transition from G2 to mitosis. Association with rum1 promotes its proteolysis during G1. Also essential for initiation of meiosis II. The protein is G2/mitotic-specific cyclin cdc13 of Schizosaccharomyces pombe (strain 972 / ATCC 24843) (Fission yeast).